The chain runs to 485 residues: Glutamate mutase epsilon subunit (485 aa).

Position 100 (arginine 100) interacts with L-glutamate. Asparagine 123 serves as a coordination point for adenosylcob(III)alamin. L-glutamate contacts are provided by residues 149-150 (KH) and aspartate 171. 4 residues coordinate adenosylcob(III)alamin: proline 180, phenylalanine 297, lysine 326, and glutamate 330.

It belongs to the methylaspartate mutase GlmE subunit family. As to quaternary structure, heterotetramer composed of 2 epsilon subunits (GlmE) and 2 sigma subunits (GlmS). GlmE exists as a homodimer and GlmS as a monomer. Requires adenosylcob(III)alamin as cofactor.

The catalysed reaction is (2S,3S)-3-methyl-L-aspartate = L-glutamate. The protein operates within amino-acid degradation; L-glutamate degradation via mesaconate pathway; acetate and pyruvate from L-glutamate: step 1/4. Catalyzes the carbon skeleton rearrangement of L-glutamate to L-threo-3-methylaspartate ((2S,3S)-3-methylaspartate). In Fusobacterium nucleatum subsp. nucleatum (strain ATCC 25586 / DSM 15643 / BCRC 10681 / CIP 101130 / JCM 8532 / KCTC 2640 / LMG 13131 / VPI 4355), this protein is Glutamate mutase epsilon subunit.